Reading from the N-terminus, the 146-residue chain is Ribosome maturation factor RimP (146 aa).

The protein belongs to the RimP family.

The protein resides in the cytoplasm. Functionally, required for maturation of 30S ribosomal subunits. The chain is Ribosome maturation factor RimP from Helicobacter pylori (strain G27).